A 255-amino-acid chain; its full sequence is Ribosomal RNA small subunit methyltransferase A (255 aa).

Residues His12, Leu14, Gly39, Glu60, Asp81, and Asn103 each coordinate S-adenosyl-L-methionine.

It belongs to the class I-like SAM-binding methyltransferase superfamily. rRNA adenine N(6)-methyltransferase family. RsmA subfamily.

It is found in the cytoplasm. The catalysed reaction is adenosine(1518)/adenosine(1519) in 16S rRNA + 4 S-adenosyl-L-methionine = N(6)-dimethyladenosine(1518)/N(6)-dimethyladenosine(1519) in 16S rRNA + 4 S-adenosyl-L-homocysteine + 4 H(+). In terms of biological role, specifically dimethylates two adjacent adenosines (A1518 and A1519) in the loop of a conserved hairpin near the 3'-end of 16S rRNA in the 30S particle. May play a critical role in biogenesis of 30S subunits. The sequence is that of Ribosomal RNA small subunit methyltransferase A from Variovorax paradoxus (strain S110).